The following is a 301-amino-acid chain: Phosphoglycolate phosphatase 2 (301 aa).

Asp19 (nucleophile) is an active-site residue.

The protein belongs to the HAD-like hydrolase superfamily. CbbY/CbbZ/Gph/YieH family.

It carries out the reaction 2-phosphoglycolate + H2O = glycolate + phosphate. Dephosphorylates 2-phosphoglycolate, but does not contribute to photorespiratory metabolism. The polypeptide is Phosphoglycolate phosphatase 2 (PGLP2) (Arabidopsis thaliana (Mouse-ear cress)).